A 446-amino-acid polypeptide reads, in one-letter code: Phosphoglucosamine mutase (446 aa).

The active-site Phosphoserine intermediate is S103. Mg(2+)-binding residues include S103, D242, D244, and D246. A Phosphoserine modification is found at S103.

It belongs to the phosphohexose mutase family. It depends on Mg(2+) as a cofactor. Activated by phosphorylation.

It catalyses the reaction alpha-D-glucosamine 1-phosphate = D-glucosamine 6-phosphate. Its function is as follows. Catalyzes the conversion of glucosamine-6-phosphate to glucosamine-1-phosphate. The sequence is that of Phosphoglucosamine mutase from Vibrio vulnificus (strain CMCP6).